A 259-amino-acid polypeptide reads, in one-letter code: 5'-nucleotidase SurE (259 aa).

A divalent metal cation contacts are provided by Asp8, Asp9, Ser41, and Asn93.

Belongs to the SurE nucleotidase family. A divalent metal cation is required as a cofactor.

Its subcellular location is the cytoplasm. It carries out the reaction a ribonucleoside 5'-phosphate + H2O = a ribonucleoside + phosphate. In terms of biological role, nucleotidase that shows phosphatase activity on nucleoside 5'-monophosphates. In Verminephrobacter eiseniae (strain EF01-2), this protein is 5'-nucleotidase SurE.